The following is a 535-amino-acid chain: Ribonuclease Y 2 (535 aa).

A helical membrane pass occupies residues 1–21 (MLITGLIIGCLLIGLVIGYVV). Residues 207–268 (LEHTVTVPNG…IRREVARVAL (62 aa)) enclose the KH domain. Positions 334-427 (VLLHSIEVAQ…VAAADAISGA (94 aa)) constitute an HD domain.

Belongs to the RNase Y family.

Its subcellular location is the cell membrane. Endoribonuclease that initiates mRNA decay. The sequence is that of Ribonuclease Y 2 from Levilactobacillus brevis (strain ATCC 367 / BCRC 12310 / CIP 105137 / JCM 1170 / LMG 11437 / NCIMB 947 / NCTC 947) (Lactobacillus brevis).